The chain runs to 334 residues: Trans-O-hydroxybenzylidenepyruvate hydratase-aldolase (334 aa).

The protein belongs to the DapA family.

The catalysed reaction is (3E)-4-(2-hydroxyphenyl)-2-oxobut-3-enoate + H2O = salicylaldehyde + pyruvate. The protein operates within aromatic compound metabolism; naphthalene degradation. Involved in the naphthalene upper catabolic pathway. Catalyzes the transformation of trans-O-hydroxybenzylidenepyruvate (THBPA) to salicylaldehyde and pyruvate. The reaction is reversible. The chain is Trans-O-hydroxybenzylidenepyruvate hydratase-aldolase (pahE) from Pseudomonas aeruginosa.